The chain runs to 308 residues: Transaldolase (308 aa).

Lys125 serves as the catalytic Schiff-base intermediate with substrate.

This sequence belongs to the transaldolase family. Type 1 subfamily. As to quaternary structure, homodimer.

It localises to the cytoplasm. It catalyses the reaction D-sedoheptulose 7-phosphate + D-glyceraldehyde 3-phosphate = D-erythrose 4-phosphate + beta-D-fructose 6-phosphate. It participates in carbohydrate degradation; pentose phosphate pathway; D-glyceraldehyde 3-phosphate and beta-D-fructose 6-phosphate from D-ribose 5-phosphate and D-xylulose 5-phosphate (non-oxidative stage): step 2/3. In terms of biological role, transaldolase is important for the balance of metabolites in the pentose-phosphate pathway. The sequence is that of Transaldolase from Ectopseudomonas mendocina (strain ymp) (Pseudomonas mendocina).